We begin with the raw amino-acid sequence, 217 residues long: Lipid transferase CIDEA (217 aa).

In terms of domain architecture, CIDE-N spans 33–110 (PARPFRVSNH…ILEKGQKWTP (78 aa)). The tract at residues 163–180 (CTSFKAVLRNLLRFMSYA) is amphipathic helix.

Belongs to the CIDE family. As to quaternary structure, homodimer. Interacts with CIDEC. Directly interacts with CEBPB. Interacts with isoform CLSTN3beta of CLSTN3; inhibiting the lipid transferase activity of CIDEA. In terms of tissue distribution, highly expressed in brown adipose tissue and, at lower levels, in white adipose tissue (at protein level). Undetectable in undifferentiated preadipocytes. Expressed in mammary gland during pregnancy and lactation, in epithelial cells, but not in the surrounding adipose tissue. Secreted into milk via milk fat globules.

It localises to the lipid droplet. Its subcellular location is the nucleus. The catalysed reaction is a triacyl-sn-glycerol(in) = a triacyl-sn-glycerol(out). Its function is as follows. Lipid transferase that promotes unilocular lipid droplet formation by mediating lipid droplet fusion. Lipid droplet fusion promotes their enlargement, restricting lipolysis and favoring lipid storage. Localizes on the lipid droplet surface, at focal contact sites between lipid droplets, and mediates atypical lipid droplet fusion by promoting directional net neutral lipid transfer from the smaller to larger lipid droplets. The transfer direction may be driven by the internal pressure difference between the contacting lipid droplet pair and occurs at a lower rate than that promoted by CIDEC. May also act as a CEBPB coactivator in epithelial cells to control the expression of a subset of CEBPB downstream target genes, including ID2, IGF1, PRLR, SOCS1, SOCS3, XDH, but not casein. By interacting with CEBPB, strengthens the association of CEBPB with the XDH promoter, increases histone acetylation and dissociates HDAC1 from the promoter. When overexpressed, induces apoptosis; the physiological significance of its role in apoptosis is unclear. This is Lipid transferase CIDEA from Mus musculus (Mouse).